Consider the following 190-residue polypeptide: Small ribosomal subunit protein eS7A (190 aa).

Serine 2 bears the N-acetylserine mark. Glycyl lysine isopeptide (Lys-Gly) (interchain with G-Cter in ubiquitin) cross-links involve residues lysine 83, lysine 84, and lysine 124.

This sequence belongs to the eukaryotic ribosomal protein eS7 family. As to quaternary structure, component of the small ribosomal subunit (SSU). Mature yeast ribosomes consist of a small (40S) and a large (60S) subunit. The 40S small subunit contains 1 molecule of ribosomal RNA (18S rRNA) and 33 different proteins (encoded by 57 genes). The large 60S subunit contains 3 rRNA molecules (25S, 5.8S and 5S rRNA) and 46 different proteins (encoded by 81 genes). Interacts with snoRNA U3. uS11 interacts with MPP10. Component of the ribosomal small subunit (SSU) processome composed of at least 40 protein subunits and snoRNA U3. Post-translationally, N-terminally acetylated by acetyltransferase NatA. In terms of processing, ubiquitinated at Lys-83 and Lys-84 in response to stalled ribosomes, leading to activation of the No-Go Decay (NGD) pathway: first monoubiquitinated by MOT2/NOT4, followed by formation by HEL2 of 'Lys-63'-linked polyubiquitin chains on monoubiquitin.

It is found in the cytoplasm. The protein resides in the nucleus. The protein localises to the nucleolus. Component of the ribosome, a large ribonucleoprotein complex responsible for the synthesis of proteins in the cell. The small ribosomal subunit (SSU) binds messenger RNAs (mRNAs) and translates the encoded message by selecting cognate aminoacyl-transfer RNA (tRNA) molecules. The large subunit (LSU) contains the ribosomal catalytic site termed the peptidyl transferase center (PTC), which catalyzes the formation of peptide bonds, thereby polymerizing the amino acids delivered by tRNAs into a polypeptide chain. The nascent polypeptides leave the ribosome through a tunnel in the LSU and interact with protein factors that function in enzymatic processing, targeting, and the membrane insertion of nascent chains at the exit of the ribosomal tunnel. eS7 is involved in nucleolar processing of pre-18S ribosomal RNA and ribosome assembly. The polypeptide is Small ribosomal subunit protein eS7A (Saccharomyces cerevisiae (strain ATCC 204508 / S288c) (Baker's yeast)).